We begin with the raw amino-acid sequence, 153 residues long: Neuromedin-S (153 aa).

The signal sequence occupies residues 1 to 26; the sequence is MKHPLPHYSPILFIYCFCMLQIPSSG. 3 consecutive propeptides follow at residues 27 to 69, 70 to 105, and 106 to 108; these read ASPP…VYKR, FLFH…ASRR, and MKR. Asn144 is modified (asparagine amide). A propeptide spanning residues 147-153 is cleaved from the precursor; the sequence is YTDNNFQ.

Belongs to the NmU family.

Its subcellular location is the secreted. In terms of biological role, implicated in the regulation of circadian rhythms through autocrine and/or paracrine actions. The chain is Neuromedin-S (Nms) from Mus musculus (Mouse).